Consider the following 764-residue polypeptide: ATP-dependent DNA helicase DDM1 (764 aa).

A disordered region spans residues 1–42 (MVSLRSRKVIPASEMVSDGKTEKDASGDSPTSVLNEEENCEE). The span at 17 to 26 (SDGKTEKDAS) shows a compositional bias: basic and acidic residues. Residues 62-88 (LISEAMAQEEEQLLKLREDEEKANNAG) are a coiled coil. A disordered region spans residues 129 to 152 (IESESQKAEPEKTGRGRKRKAASQ). Over residues 132-142 (ESQKAEPEKTG) the composition is skewed to basic and acidic residues. Residues 145–152 (RKRKAASQ) carry the Nuclear localization signal 1 motif. Positions 214–382 (ISLWQNGLNG…WSLLNFILPD (169 aa)) constitute a Helicase ATP-binding domain. 227 to 234 (DQMGLGKT) is a binding site for ATP. The DEAH box motif lies at 333–336 (DEGH). The Nuclear localization signal 2 signature appears at 429–436 (LRRMKCDV). Residues 528–695 (LLERLLVRLF…STPLEEEDIL (168 aa)) enclose the Helicase C-terminal domain.

This sequence belongs to the SNF2/RAD54 helicase family. Interacts with the MBD domains of MBD2, MBD5 and MBD6.

Its subcellular location is the nucleus. It catalyses the reaction ATP + H2O = ADP + phosphate + H(+). With respect to regulation, ATPase activity is stimulated 3-fold by DNA (both free and nucleosomal) binding. In terms of biological role, ATP-dependent DNA helicase that plays a role in formation, organization, stability and heritability of heterochromatin and thus regulates several physiological traits. Binds to the nucleosome and promotes chromatin remodeling in an ATP-dependent manner; induces nucleosome repositioning on a short DNA fragment, and, possibly, could be guided to target sites (including silent transposable elements) by small interfering RNAs (siRNAs). Can bind both free and nucleosomal DNA. Required for the heritable maintenance of genome integrity and transcriptional gene silencing (TGS), including homology-dependent gene silencing (HDG silencing), via the maintenance of DNA methylation (mostly on cytosine, in both CpG and CpHpG sites, where H is A, T or C) and of histone methylation (e.g. chromatin methylation). May facilitate localization of MBD proteins at specific nuclear domains. Necessary for the maintenance of the genomic imprint at the MEA locus, especially for the silencing of paternally inherited MEA locus. Plays a major role in the inactivation maintenance of retrotransposons (e.g. Tar17, SINE, LINE, ATLN39, CAC1 (CACTAs), Athila elements, and mutator-like elements MULEs and TIR-MULEs) and the silencing of repeated genes and transgenes (e.g. T-DNA insertions). Required for KYP-dependent histone H3 'Lys-9' (H3K9me) methylation, deacetylation of histone H4 'Lys-16' (H4K16) and MET1-dependent DNA methylation. Involved in the chromatin organization of 5S rRNA genes (localized in the pericentromeric heterochromatin of chromosomes 3, 4, and 5) modifications during heterochromatin establishment. Prevents siRNA accumulation (siRNA are probably involved in epigenetic inheritance and in 5S rRNA genes regulation by silencing). Required during plant organogenesis and development, as well as during seed formation. This is ATP-dependent DNA helicase DDM1 (DDM1) from Arabidopsis thaliana (Mouse-ear cress).